We begin with the raw amino-acid sequence, 213 residues long: tRNA (guanine-N(7)-)-methyltransferase (213 aa).

The S-adenosyl-L-methionine site is built by Asp-40, Glu-65, Asn-92, and Asp-118. Residue Asp-118 is part of the active site. The substrate site is built by Lys-122 and Asp-154.

Belongs to the class I-like SAM-binding methyltransferase superfamily. TrmB family.

It catalyses the reaction guanosine(46) in tRNA + S-adenosyl-L-methionine = N(7)-methylguanosine(46) in tRNA + S-adenosyl-L-homocysteine. The protein operates within tRNA modification; N(7)-methylguanine-tRNA biosynthesis. In terms of biological role, catalyzes the formation of N(7)-methylguanine at position 46 (m7G46) in tRNA. The chain is tRNA (guanine-N(7)-)-methyltransferase from Synechococcus elongatus (strain ATCC 33912 / PCC 7942 / FACHB-805) (Anacystis nidulans R2).